We begin with the raw amino-acid sequence, 1587 residues long: DNA topoisomerase 2 (1587 aa).

The span at 1 to 15 (MSDADPFDMSDDDDN) shows a compositional bias: acidic residues. Positions 1 to 47 (MSDADPFDMSDDDDNSVLSHTPPKKQKKAPTTKKGGSKPLADVENES) are disordered. Residues 22-31 (PPKKQKKAPT) show a composition bias toward basic residues. Residues asparagine 126, asparagine 155, 183 to 185 (SSN), and 196 to 203 (GRNGFGAK) each bind ATP. Interaction with DNA regions lie at residues 381–383 (KKK) and 381–386 (KKKNKN). 415–417 (QTK) is an ATP binding site. Residues 461–485 (MLKKTDGGRRSRMNNPKLTDANKAG) are disordered. One can recognise a Toprim domain in the interval 492–606 (CTLILTEGDS…SLLKIPEFLI (115 aa)). Residues glutamate 498, aspartate 575, and aspartate 577 each contribute to the Mg(2+) site. The Topo IIA-type catalytic domain occupies 743–1190 (IPSVVDGLKP…SKEDIWKRDL (448 aa)). The active-site O-(5'-phospho-DNA)-tyrosine intermediate is tyrosine 833. The tract at residues 1016 to 1025 (KLSKTMTTTN) is interaction with DNA. The disordered stretch occupies residues 1204–1587 (EARRQRKVAN…PRPRRPRRRS (384 aa)). Low complexity predominate over residues 1271 to 1280 (LSFLGKSSAK). The segment covering 1308–1320 (PKSEPKADPKPKD) has biased composition (basic and acidic residues). Over residues 1321–1334 (EDEDIVMEDSDIEE) the composition is skewed to acidic residues. Residues 1348–1364 (VKPESEDGQAKIAEAPK) show a composition bias toward basic and acidic residues. The span at 1365-1375 (RGRAAAKPKPK) shows a compositional bias: basic residues. Composition is skewed to acidic residues over residues 1379–1391 (EDEE…DDFM) and 1419–1430 (SDSDSDNGDDLL). 2 stretches are compositionally biased toward polar residues: residues 1441–1451 (GSTNGASTSDS) and 1466–1475 (GLKTTASKAS). Residues 1512–1521 (DNEPEDDDDE) show a composition bias toward acidic residues. Over residues 1524 to 1542 (KPAAKGKAAAKGKSTAAAA) the composition is skewed to low complexity. Pro residues predominate over residues 1558 to 1568 (PKPPPRLPCPL). Basic residues predominate over residues 1571–1587 (RRTHRSNPRPRRPRRRS).

The protein belongs to the type II topoisomerase family. As to quaternary structure, homodimer. The cofactor is Mg(2+). It depends on Mn(2+) as a cofactor. Ca(2+) serves as cofactor.

The protein resides in the nucleus. The catalysed reaction is ATP-dependent breakage, passage and rejoining of double-stranded DNA.. In terms of biological role, control of topological states of DNA by transient breakage and subsequent rejoining of DNA strands. Topoisomerase II makes double-strand breaks. The sequence is that of DNA topoisomerase 2 (TOP2) from Penicillium chrysogenum (Penicillium notatum).